The following is a 1353-amino-acid chain: Protein timeless homolog (1353 aa).

Disordered stretches follow at residues 798–825 (VAED…EEEV), 1150–1291 (KPTR…LEED), and 1306–1335 (GGSI…DPFT). Over residues 802 to 825 (RAEDPDEEDPAEPYDSEQEEEEEV) the composition is skewed to acidic residues. Composition is skewed to basic and acidic residues over residues 1150–1160 (KPTRQVERHLE) and 1168–1182 (ERSK…KFDD). Acidic residues-rich tracts occupy residues 1183–1206 (FLND…EEEE) and 1217–1226 (DSEDEEEHIE). The span at 1227–1239 (QEEAQKKLEKVAE) shows a compositional bias: basic and acidic residues. 3 stretches are compositionally biased toward acidic residues: residues 1261–1273 (DSSD…DSAE), 1282–1291 (AEDDSDLEED), and 1323–1332 (EEREDDDDED).

The protein belongs to the timeless family. Associates with the cohesin complex. Interacts with smc-1, smc-3, scc-1 and scc-3.

Its subcellular location is the nucleus. Plays an important role in chromosome cohesion during both mitosis and meiosis. In prophase of meiosis, it is involved in the formation of the synaptonemal complex (SC) and specifically, in the diplotene and diakinesis phases of prophase, it stabilizes the association of homologous chromosomes during synapsis and sister chromatid cohesion. It regulates cohesin subunits to promote meiotic chromosome cohesion and localizes non-SMC (structural maintenance of chromosome) cohesin subunits to chromatin prior to or during pre-meiotic S phase. Implicated in influencing either the stability or loading of meiotic-specific cohesin subunit, rec8. Controls cell cycle exit and cell fusion to prevent the premature differentiation into adult cells. Specifically, regulates hypodermal seam cell identity. This chain is Protein timeless homolog, found in Caenorhabditis elegans.